We begin with the raw amino-acid sequence, 349 residues long: Sphingolipid C4-hydroxylase SUR2 (349 aa).

5 consecutive transmembrane segments (helical) span residues 9–29 (AAGS…MHYA), 50–70 (VLAL…FHVI), 99–119 (FLEV…FMHF), 148–168 (IYYG…FLFV), and 209–229 (PVEG…LTHL). The Fatty acid hydroxylase domain occupies 162–297 (FAGFLFVDTW…FTFWDNLFQT (136 aa)).

Belongs to the sterol desaturase family.

The protein resides in the endoplasmic reticulum membrane. The catalysed reaction is sphinganine + 2 Fe(II)-[cytochrome b5] + O2 + 2 H(+) = (4R)-hydroxysphinganine + 2 Fe(III)-[cytochrome b5] + H2O. The enzyme catalyses an N-acylsphinganine + 2 Fe(II)-[cytochrome b5] + O2 + 2 H(+) = an N-acyl-(4R)-4-hydroxysphinganine + 2 Fe(III)-[cytochrome b5] + H2O. It catalyses the reaction an N-acyleicosasphinganine + 2 Fe(II)-[cytochrome b5] + O2 + 2 H(+) = N-acyl-4-hydroxyeicosasphinganine + 2 Fe(III)-[cytochrome b5] + H2O. It functions in the pathway membrane lipid metabolism; sphingolipid biosynthesis. Required for hydroxylation of C-4 in the sphingoid moiety of ceramide. Catalyzes the conversion of sphinganine to phytosphingosine in sphingolipid biosynthesis. Involved in the response to syringomycin. The polypeptide is Sphingolipid C4-hydroxylase SUR2 (SUR2) (Saccharomyces cerevisiae (strain ATCC 204508 / S288c) (Baker's yeast)).